A 1088-amino-acid chain; its full sequence is Exportin-T (1088 aa).

Residues 435 to 503 (KNNNNKNKNT…VKNANNIKNN (69 aa)) are compositionally biased toward low complexity. Disordered stretches follow at residues 435–513 (KNNN…DDDD) and 1059–1088 (LNNN…KNGH).

The protein belongs to the exportin family.

Its subcellular location is the nucleus. It is found in the cytoplasm. Functionally, mediates the nuclear export of aminoacylated tRNAs. This chain is Exportin-T (xpot), found in Dictyostelium discoideum (Social amoeba).